Here is a 1132-residue protein sequence, read N- to C-terminus: MESQQDEAVQTKGASTSSDAQDQGAEKGAKNKTTEATEGPTSEPPLSGPGRLKKTAMKLFGGKKGICTLPSFFGGGRSKGSGKVSSKKSLNKSKTHDGLSEASQGPEDVVIEETDLSTPLSKSSAQFPSSQSANGALEIGSKHKTSGTEAIEKAGVEKVPSVHKPKKSLKSFFSSIRRHRKGKTSGADQSVPGAKELEGARTRSHEHVSSISLPSSEEIFRDTRKENAKPQDAPGPKMSPAQVHFSPTTEKAACKNPEKLTRTCASEFMQPKPVLEGGSLEEPHTSETEGKVVAGEVNPPNGPVGDQLSLLFGDVTSLKSFDSLTGCGDIIAEQDMDSMTDSMASGGQRANRDGTKRSSCLVTYQGGGEEMALPDDDDNDDEEEEEEEEEEEEEEEEEEEEEEEEEEEELLEDEEEVKDGEENDDLEYLWASAQIYPRFNMNLGYHTAISPSHQGYMLLDPVQSYPNLGLGELLTPQSDQQESAPNSDEGYYDSTTPGFEDDSGEALGLAHRDCLPRDSYSGDALYEFYEPDDSLEHSPPGDDCLYDLRGRNSEMLDPFLNLEPFSSRPPGAMETEEERLVTIQKQLLYWELRREQREAQEACAREAHAREAYARDTHTRESYGRNVRARETQALEAHSQEGRVQETKVRQEKPALEYQMRPLGPSVMGLVAGTSGGSQTSHRGTTSAFPATSSSEPDWRDFRPLEKRFEGTCSKKDQSTCLMQLFQSDAMFEPDMQEANFGGSPRKAYPSYSPPEEPEEEEEEKEGNATVSFSQALVEFTSNGNLFTSMSYSSDSDSSFTQNLPELPPMVTFDIADVERDGEGKCEENPEFNNDEDLTASLEAFELGYYHKHAFNSYHSRFYQGLPWGVSSLPRYLGLPGVHPRPPPAAMALNRRSRSLDNAESLELELSSSHLAQGYMESDELQAHQEDSDEEGEEEEGEWGRDSPLSLYTEPPGVYDWPPWAHCPLPVGPGLAWMSPNQLYEPFNQSSYVQATCCVPPVAMPVSVPGRTPGDSVSQLARPSHLPLPMGPCYNLQSQASQSGRAKPRDVLLPVDEPSCSSISGANSQSQAKPVGITHGIPQLPRVRPEPFQLQPNHYRASNLDLSKERGEQGASLSTSYSSTAMNGNLAK.

Residue M1 is modified to N-acetylmethionine. Positions 1–21 are enriched in polar residues; that stretch reads MESQQDEAVQTKGASTSSDAQ. Disordered stretches follow at residues 1-256, 268-301, 338-423, 469-505, 674-699, 736-770, 924-949, and 1038-1132; these read MESQ…ACKN, FMQP…NPPN, SMTD…GEEN, GLGE…DSGE, TSGG…EPDW, MQEA…GNAT, ELQA…DSPL, and SQAS…NLAK. Residues 24–35 are compositionally biased toward basic and acidic residues; it reads GAEKGAKNKTTE. Low complexity predominate over residues 121 to 133; it reads SKSSAQFPSSQSA. Composition is skewed to basic and acidic residues over residues 195-208, 218-229, and 281-290; these read KELE…HEHV, EIFRDTRKENAK, and EEPHTSETEG. Residues 372 to 423 show a composition bias toward acidic residues; it reads ALPDDDDNDDEEEEEEEEEEEEEEEEEEEEEEEEEEEELLEDEEEVKDGEEN. Polar residues-rich tracts occupy residues 475–486 and 677–696; these read TPQSDQQESAPN and GSQT…SSSE. Composition is skewed to acidic residues over residues 756–765 and 931–941; these read EEPEEEEEEK and DSDEEGEEEEG. Composition is skewed to polar residues over residues 1059–1072 and 1115–1132; these read SCSS…QSQA and ASLS…NLAK.

This sequence belongs to the Amer family. As to quaternary structure, interacts with CTNNB1, AXIN1, LRP6, KEAP1, APC and BTRC. Interacts with SCF (SKP1-CUL1-F-box protein) E3 ubiquitin-protein ligase complexes containing BTRC and/or FBXW11. Identified in the beta-catenin destruction complex containing CTNNB1, APC, AXIN1 and AXIN2. Interacts with WT1. As to expression, expressed in kidney.

It is found in the cytoplasm. Its subcellular location is the cell membrane. The protein resides in the nucleus. Regulator of the canonical Wnt signaling pathway. Acts by specifically binding phosphatidylinositol 4,5-bisphosphate (PtdIns(4,5)P2), translocating to the cell membrane and interacting with key regulators of the canonical Wnt signaling pathway, such as components of the beta-catenin destruction complex. Acts both as a positive and negative regulator of the Wnt signaling pathway, depending on the context: acts as a positive regulator by promoting LRP6 phosphorylation. Also acts as a negative regulator by acting as a scaffold protein for the beta-catenin destruction complex and promoting stabilization of Axin at the cell membrane. Promotes CTNNB1 ubiquitination and degradation. Involved in kidney development. The chain is APC membrane recruitment protein 1 (Amer1) from Mus musculus (Mouse).